A 762-amino-acid chain; its full sequence is Cell surface protein (762 aa).

An N-terminal signal peptide occupies residues 1–26 (MKNLKKLIAVVSTFALVFSAMAVGFA). SLH domains follow at residues 27–90 (ATTP…EMAK), 92–155 (EKSA…WPYG), and 156–204 (YLAK…KEVL). Residues Y297, Y516, Y520, and Y632 are each glycosylated (O-linked (Glc...) tyrosine).

Glycosylated; contains 8% carbohydrates, which correspond to about 40 to 50 sugar molecules per monomer. O-linked glycans consist of Glc, GalNAc and GlcNAc.

Its subcellular location is the secreted. The protein resides in the cell wall. The protein localises to the S-layer. In terms of biological role, the S-layer is a paracrystalline mono-layered assembly of proteins which coat the surface of bacteria. This Thermoanaerobacter kivui (Acetogenium kivui) protein is Cell surface protein.